We begin with the raw amino-acid sequence, 503 residues long: Maturase K (503 aa).

This sequence belongs to the intron maturase 2 family. MatK subfamily.

It localises to the plastid. Its subcellular location is the chloroplast. Functionally, usually encoded in the trnK tRNA gene intron. Probably assists in splicing its own and other chloroplast group II introns. This is Maturase K from Liquidambar formosana (Formosan gum).